We begin with the raw amino-acid sequence, 985 residues long: NAD kinase 2, chloroplastic (985 aa).

The transit peptide at 1-62 (MFLCFCPCHV…KRRLRFVIRA (62 aa)) directs the protein to the chloroplast. The tract at residues 335-380 (APKAEQVELFASIVSDSSKRPIYVHSKEGVWRTSAMVSRWKQYMTR) is calmodulin-binding. Disordered stretches follow at residues 389–466 (SEES…PPGN) and 548–615 (FSNG…DEAG). Basic and acidic residues-rich tracts occupy residues 390–399 (EESKRREVSE) and 413–429 (VPDE…EVDS). Over residues 548-569 (FSNGNVHASDNTNKSISDNRGN) the composition is skewed to polar residues.

It belongs to the NAD kinase family. As to expression, expressed in leaves.

Its subcellular location is the plastid. The protein resides in the chloroplast. The enzyme catalyses NAD(+) + ATP = ADP + NADP(+) + H(+). Involved in chlorophyll synthesis and chloroplast protection against oxidative damage. In Arabidopsis thaliana (Mouse-ear cress), this protein is NAD kinase 2, chloroplastic (NADK2).